Here is a 369-residue protein sequence, read N- to C-terminus: Anhydro-N-acetylmuramic acid kinase (369 aa).

Position 12–19 (12–19 (GTSLDGVD)) interacts with ATP.

It belongs to the anhydro-N-acetylmuramic acid kinase family.

The catalysed reaction is 1,6-anhydro-N-acetyl-beta-muramate + ATP + H2O = N-acetyl-D-muramate 6-phosphate + ADP + H(+). It functions in the pathway amino-sugar metabolism; 1,6-anhydro-N-acetylmuramate degradation. The protein operates within cell wall biogenesis; peptidoglycan recycling. Catalyzes the specific phosphorylation of 1,6-anhydro-N-acetylmuramic acid (anhMurNAc) with the simultaneous cleavage of the 1,6-anhydro ring, generating MurNAc-6-P. Is required for the utilization of anhMurNAc either imported from the medium or derived from its own cell wall murein, and thus plays a role in cell wall recycling. This Shigella boydii serotype 18 (strain CDC 3083-94 / BS512) protein is Anhydro-N-acetylmuramic acid kinase.